Reading from the N-terminus, the 371-residue chain is Putative agmatine deiminase (371 aa).

Cys-361 acts as the Amidino-cysteine intermediate in catalysis.

This sequence belongs to the agmatine deiminase family.

The catalysed reaction is agmatine + H2O = N-carbamoylputrescine + NH4(+). This Selenomonas ruminantium protein is Putative agmatine deiminase.